A 214-amino-acid chain; its full sequence is Adenylate kinase (214 aa).

10-15 (GAGKGT) provides a ligand contact to ATP. An NMP region spans residues 30–59 (STGDMLRAAVKAGTPLGLEAKKVMDAGQLV). AMP contacts are provided by residues T31, R36, 57-59 (QLV), 85-88 (GFPR), and Q92. The interval 122-159 (GRRVHPGSGRVYHVVFNPPKVEGKDDVTGEDLVIRPDD) is LID. ATP contacts are provided by residues R123 and 132 to 133 (VY). AMP is bound by residues R156 and R167. ATP is bound at residue Q200.

Belongs to the adenylate kinase family. In terms of assembly, monomer.

It is found in the cytoplasm. It catalyses the reaction AMP + ATP = 2 ADP. Its pathway is purine metabolism; AMP biosynthesis via salvage pathway; AMP from ADP: step 1/1. In terms of biological role, catalyzes the reversible transfer of the terminal phosphate group between ATP and AMP. Plays an important role in cellular energy homeostasis and in adenine nucleotide metabolism. This chain is Adenylate kinase, found in Shewanella amazonensis (strain ATCC BAA-1098 / SB2B).